A 501-amino-acid polypeptide reads, in one-letter code: MLPPKIFFEKVKEIMWPIERKELKLFIPMALMMLCILFNFGALRSIKDSLVVPSMGAEIISFLKLWLVLPSCVIFTVLYVKLSNNLNFEYIFYIIVGSFLLFFLLFAYIIYPNQDIYHPNDEMINKLIASYPNFKWFIKIGSQWSYALMYIFAELWSAVVINLMFWQFANHIFDTSKAKRFYPVLGMVGNIGLIIAGSVLVFFSSGQDVIDSELLPDSFNSSAGNAIMLQPIMSIIVTAGIIAMLLFRIINRFILTDSINVLDAKKVTAKMKTKLSVIESIKLVIHSKYIGRIALLIICYGLLINIVEGPWKAKIKELHPNTIDYVNFMGRFNIWMGISCVTFMIIGSNILRRLGWLISALLTPIMLSITGLMFFIFIIFIEEIGECFGDFNLLYAAIIVGAIQNILSKSSKYSLFDSTKEMAYIPLSLELRTKGKAAVEVIGTKFGKSLGAFIQSLIFIIIPTATFDSIIIYLLITFIVMMSLWIWNVIKLNKEYVELCK.

Transmembrane regions (helical) follow at residues 23 to 43, 59 to 79, 90 to 110, 146 to 166, 183 to 203, 227 to 247, 293 to 313, 326 to 346, 361 to 381, 387 to 407, 446 to 466, and 470 to 490; these read LKLF…FGAL, IISF…TVLY, YIFY…AYII, YALM…LMFW, PVLG…LVFF, IMLQ…MLLF, IALL…PWKA, VNFM…FMII, LLTP…IIFI, CFGD…QNIL, FGKS…PTAT, and IIIY…WNVI.

It belongs to the ADP/ATP translocase tlc family.

The protein localises to the cell membrane. Functionally, provides the rickettsial cell with host ATP in exchange for rickettsial ADP. This is an obligate exchange system. This energy acquiring activity is an important component of rickettsial parasitism. The protein is ADP,ATP carrier protein 3 (tlcC) of Rickettsia conorii (strain ATCC VR-613 / Malish 7).